The sequence spans 275 residues: Formamidopyrimidine-DNA glycosylase (275 aa).

Pro2 functions as the Schiff-base intermediate with DNA in the catalytic mechanism. Glu3 functions as the Proton donor in the catalytic mechanism. The Proton donor; for beta-elimination activity role is filled by Lys58. His91 and Arg110 together coordinate DNA. The FPG-type zinc finger occupies 238–272 (QVYGQTGKPCPRCGQAIVKLKVGGRGTHICPKCQK). Catalysis depends on Arg262, which acts as the Proton donor; for delta-elimination activity.

The protein belongs to the FPG family. Monomer. It depends on Zn(2+) as a cofactor.

The catalysed reaction is Hydrolysis of DNA containing ring-opened 7-methylguanine residues, releasing 2,6-diamino-4-hydroxy-5-(N-methyl)formamidopyrimidine.. It carries out the reaction 2'-deoxyribonucleotide-(2'-deoxyribose 5'-phosphate)-2'-deoxyribonucleotide-DNA = a 3'-end 2'-deoxyribonucleotide-(2,3-dehydro-2,3-deoxyribose 5'-phosphate)-DNA + a 5'-end 5'-phospho-2'-deoxyribonucleoside-DNA + H(+). Its function is as follows. Involved in base excision repair of DNA damaged by oxidation or by mutagenic agents. Acts as a DNA glycosylase that recognizes and removes damaged bases. Has a preference for oxidized purines, such as 7,8-dihydro-8-oxoguanine (8-oxoG). Has AP (apurinic/apyrimidinic) lyase activity and introduces nicks in the DNA strand. Cleaves the DNA backbone by beta-delta elimination to generate a single-strand break at the site of the removed base with both 3'- and 5'-phosphates. The chain is Formamidopyrimidine-DNA glycosylase from Streptococcus pyogenes serotype M28 (strain MGAS6180).